The chain runs to 85 residues: Small ribosomal subunit protein bS16 (85 aa).

It belongs to the bacterial ribosomal protein bS16 family.

The chain is Small ribosomal subunit protein bS16 from Clostridium kluyveri (strain NBRC 12016).